Consider the following 527-residue polypeptide: Protein PLASTID TRANSCRIPTIONALLY ACTIVE 12, chloroplastic (527 aa).

The transit peptide at 1–30 (MASISTTTWLYRGQVCTDSGKSSNCIVQRR) directs the protein to the chloroplast. Residues 1 to 115 (MASISTTTWL…ASIPGEDYWP (115 aa)) form a PHYA-interacting region 1 (PIR1) region. Positions 89-188 (SYMDSTSGKL…NDSSDGFVTY (100 aa)) are disordered. Acidic residues predominate over residues 163–181 (TNDEVSDSEDSSEEEENDS). Short sequence motifs (nuclear localization signal) lie at residues 204 to 211 (DKKLGRPH) and 235 to 242 (WRKPEKEQ). The tract at residues 252-352 (DVETVFLKAM…EMFSHQTDRE (101 aa)) is PHYA-interacting region 2 (PIR2). Positions 458–471 (GENDDDEDDADVEK) are enriched in acidic residues. A disordered region spans residues 458 to 527 (GENDDDEDDA…LMDFEEETDP (70 aa)). Residues 485–504 (ETPELRTAKPKPKKEGRMSL) are compositionally biased toward basic and acidic residues. Acidic residues predominate over residues 506-527 (EAVDDAENLTDFLMDFEEETDP). The Required and sufficient for transcriptional transactivation activity and to trigger PIF proteins degradation signature appears at 512-520 (ENLTDFLMD).

Component of the transcriptionally active chromosome (TAC) complexes. Interacts with PTAC14 and PTAC7. Binds directly to PTAC6/PAP8 in the nucleus. Interacts with MED14. Binds to SL1/MTERF3. Binds to photoactivated phytochromes (e.g. PHYA and PHYB) via their photosensory domains; these interactions stimulate its light-mediated accumulation. Associates, via its N-terminal region, with phytochrome-interacting factors (PIFs) including PIF1, PIF3, PIF4, PIF5, PIF6, BHLH72/PIF7, UNE10/PIF8 and PIL1. Binds to RAD4. Associates with MRL7/RCB. Mostly expressed in cotyledons, leaves, stems and flowers, but barely in roots.

The protein resides in the plastid. It localises to the chloroplast. It is found in the nucleus. Functionally, involved in plastid gene expression. Acidic transcriptional coactivator necessary for the transactivation of many PIFs target genes (class B genes), particularly during the regulation of hypocotyl growth. Plays dual opposite roles in regulating hypocotyl growth, preventing it in red and far-red conditions, but promoting it otherwise. Required in the nucleus for the initiation of photomorphogenesis mediated by phytochromes (PHYs) (e.g. PHYA and PHYB) by mediating PHYs localization to photobodies, especially in response to red and far-red light, and implicating phytochrome nuclear bodies as sites of proteolysis for PHYs and PIFs proteins (e.g. PIF1 and PIF3). Acts downstream of PHYs and upstream of DET1. Involved in UV tolerance in both roots and hypocotyls, specifically in dark conditions. Element of a PIF4/HMR/MED14-dependent thermoresponsive process; acts as a PIF4 transcriptional coactivator to trigger the thermoresponsive growth-relevant genes (e.g. mainly involved in biosynthesis and signaling of the phytohormone auxin) and promote warm-temperature-dependent (e.g. 27 degrees Celsius) PIF4 and MED14 stabilization and accumulation, being more prominently involved in long days (LD) and continuous red light (Rc) than in short days (SD), thus modulating warm temperature elicitation of MED14-dependent thermomorphogenesis (e.g. hypocotyl elongation). This is Protein PLASTID TRANSCRIPTIONALLY ACTIVE 12, chloroplastic from Arabidopsis thaliana (Mouse-ear cress).